The chain runs to 120 residues: Aspartate 1-decarboxylase (120 aa).

S25 serves as the catalytic Schiff-base intermediate with substrate; via pyruvic acid. S25 carries the post-translational modification Pyruvic acid (Ser). Residue T57 coordinates substrate. The Proton donor role is filled by Y58. 73-75 (GAA) serves as a coordination point for substrate.

It belongs to the PanD family. In terms of assembly, heterooctamer of four alpha and four beta subunits. It depends on pyruvate as a cofactor. Post-translationally, is synthesized initially as an inactive proenzyme, which is activated by self-cleavage at a specific serine bond to produce a beta-subunit with a hydroxyl group at its C-terminus and an alpha-subunit with a pyruvoyl group at its N-terminus.

The protein resides in the cytoplasm. It catalyses the reaction L-aspartate + H(+) = beta-alanine + CO2. Its pathway is cofactor biosynthesis; (R)-pantothenate biosynthesis; beta-alanine from L-aspartate: step 1/1. In terms of biological role, catalyzes the pyruvoyl-dependent decarboxylation of aspartate to produce beta-alanine. The polypeptide is Aspartate 1-decarboxylase (Cupriavidus necator (strain ATCC 17699 / DSM 428 / KCTC 22496 / NCIMB 10442 / H16 / Stanier 337) (Ralstonia eutropha)).